Reading from the N-terminus, the 430-residue chain is Adenylosuccinate synthetase (430 aa).

GTP is bound by residues 12-18 (GDEGKGK) and 40-42 (GHT). The active-site Proton acceptor is D13. D13 and G40 together coordinate Mg(2+). Residues 13-16 (DEGK), 38-41 (NAGH), T130, R144, Q224, T239, and R303 contribute to the IMP site. The Proton donor role is filled by H41. 299–305 (TNTGRPR) provides a ligand contact to substrate. GTP is bound by residues R305, 331-333 (KLD), and 413-415 (STS).

This sequence belongs to the adenylosuccinate synthetase family. As to quaternary structure, homodimer. Mg(2+) is required as a cofactor.

The protein resides in the cytoplasm. The enzyme catalyses IMP + L-aspartate + GTP = N(6)-(1,2-dicarboxyethyl)-AMP + GDP + phosphate + 2 H(+). The protein operates within purine metabolism; AMP biosynthesis via de novo pathway; AMP from IMP: step 1/2. In terms of biological role, plays an important role in the de novo pathway of purine nucleotide biosynthesis. Catalyzes the first committed step in the biosynthesis of AMP from IMP. The chain is Adenylosuccinate synthetase from Rhodopseudomonas palustris (strain HaA2).